The primary structure comprises 289 residues: Ribosomal RNA small subunit methyltransferase A (289 aa).

S-adenosyl-L-methionine-binding residues include Asn21, Leu23, Gly48, Glu69, Asp94, and Asn120.

This sequence belongs to the class I-like SAM-binding methyltransferase superfamily. rRNA adenine N(6)-methyltransferase family. RsmA subfamily.

The protein resides in the cytoplasm. It catalyses the reaction adenosine(1518)/adenosine(1519) in 16S rRNA + 4 S-adenosyl-L-methionine = N(6)-dimethyladenosine(1518)/N(6)-dimethyladenosine(1519) in 16S rRNA + 4 S-adenosyl-L-homocysteine + 4 H(+). Specifically dimethylates two adjacent adenosines (A1518 and A1519) in the loop of a conserved hairpin near the 3'-end of 16S rRNA in the 30S particle. May play a critical role in biogenesis of 30S subunits. The protein is Ribosomal RNA small subunit methyltransferase A of Actinobacillus pleuropneumoniae serotype 5b (strain L20).